We begin with the raw amino-acid sequence, 146 residues long: Large ribosomal subunit protein bL21 (146 aa).

A compositionally biased stretch (basic residues) spans 95-104 (PKKKTRRKMG). The interval 95 to 146 (PKKKTRRKMGHRQELTRVMVKSISISKSTPKSSPKTEATKKSTSSKASKPEN) is disordered. A compositionally biased stretch (low complexity) spans 115 to 146 (KSISISKSTPKSSPKTEATKKSTSSKASKPEN).

The protein belongs to the bacterial ribosomal protein bL21 family. In terms of assembly, part of the 50S ribosomal subunit. Contacts protein L20.

Functionally, this protein binds to 23S rRNA in the presence of protein L20. The protein is Large ribosomal subunit protein bL21 of Prochlorococcus marinus (strain MIT 9515).